Consider the following 228-residue polypeptide: 7-cyano-7-deazaguanine synthase (228 aa).

11–21 (LSGGLDSATCL) is a binding site for ATP. Zn(2+)-binding residues include Cys-191, Cys-201, Cys-204, and Cys-207.

It belongs to the QueC family. The cofactor is Zn(2+).

It carries out the reaction 7-carboxy-7-deazaguanine + NH4(+) + ATP = 7-cyano-7-deazaguanine + ADP + phosphate + H2O + H(+). Its pathway is purine metabolism; 7-cyano-7-deazaguanine biosynthesis. Its function is as follows. Catalyzes the ATP-dependent conversion of 7-carboxy-7-deazaguanine (CDG) to 7-cyano-7-deazaguanine (preQ(0)). This Azoarcus sp. (strain BH72) protein is 7-cyano-7-deazaguanine synthase.